Here is a 274-residue protein sequence, read N- to C-terminus: Penicillin-insensitive murein endopeptidase (274 aa).

The signal sequence occupies residues 1-19 (MNKTAIALLALLASSASLA). 3 disulfide bridges follow: Cys44/Cys265, Cys187/Cys235, and Cys216/Cys223. Zn(2+) contacts are provided by His110, His113, Asp120, Asp147, His150, and His211. The interval 228–274 (LPPSGDGCGAELQSWFEPPKPGTTKPEKKTPPPLPPSCQALLDEHVI) is disordered.

It belongs to the peptidase M74 family. Dimer. It depends on Zn(2+) as a cofactor.

The protein resides in the periplasm. Inhibited by Zn(2+) at 10 mM and by metal chelating agents EDTA and 1,10-phenanthroline. Functionally, murein endopeptidase that cleaves the D-alanyl-meso-2,6-diamino-pimelyl amide bond that connects peptidoglycan strands. Likely plays a role in the removal of murein from the sacculus and could also play a role in the integration of nascent murein strands into the sacculus. This is Penicillin-insensitive murein endopeptidase (mepA) from Escherichia coli (strain K12).